We begin with the raw amino-acid sequence, 268 residues long: Aliphatic sulfonates import ATP-binding protein SsuB 2 (268 aa).

The region spanning 15 to 236 (LAVRKLQKTF…VRGSHRLAAL (222 aa)) is the ABC transporter domain. 47-54 (GRSGCGKS) serves as a coordination point for ATP.

Belongs to the ABC transporter superfamily. Aliphatic sulfonates importer (TC 3.A.1.17.2) family. The complex is composed of two ATP-binding proteins (SsuB), two transmembrane proteins (SsuC) and a solute-binding protein (SsuA).

It is found in the cell inner membrane. The catalysed reaction is ATP + H2O + aliphatic sulfonate-[sulfonate-binding protein]Side 1 = ADP + phosphate + aliphatic sulfonateSide 2 + [sulfonate-binding protein]Side 1.. Part of the ABC transporter complex SsuABC involved in aliphatic sulfonates import. Responsible for energy coupling to the transport system. The sequence is that of Aliphatic sulfonates import ATP-binding protein SsuB 2 from Pseudomonas fluorescens (strain ATCC BAA-477 / NRRL B-23932 / Pf-5).